Reading from the N-terminus, the 219-residue chain is Thiamine-phosphate synthase (219 aa).

4-amino-2-methyl-5-(diphosphooxymethyl)pyrimidine contacts are provided by residues 44-48 (QLREK) and N79. Mg(2+) contacts are provided by D80 and D99. S117 provides a ligand contact to 4-amino-2-methyl-5-(diphosphooxymethyl)pyrimidine. 143 to 145 (TST) contributes to the 2-[(2R,5Z)-2-carboxy-4-methylthiazol-5(2H)-ylidene]ethyl phosphate binding site. K146 serves as a coordination point for 4-amino-2-methyl-5-(diphosphooxymethyl)pyrimidine. 2-[(2R,5Z)-2-carboxy-4-methylthiazol-5(2H)-ylidene]ethyl phosphate is bound by residues G175 and 195–196 (IS).

Belongs to the thiamine-phosphate synthase family. Mg(2+) is required as a cofactor.

It carries out the reaction 2-[(2R,5Z)-2-carboxy-4-methylthiazol-5(2H)-ylidene]ethyl phosphate + 4-amino-2-methyl-5-(diphosphooxymethyl)pyrimidine + 2 H(+) = thiamine phosphate + CO2 + diphosphate. The catalysed reaction is 2-(2-carboxy-4-methylthiazol-5-yl)ethyl phosphate + 4-amino-2-methyl-5-(diphosphooxymethyl)pyrimidine + 2 H(+) = thiamine phosphate + CO2 + diphosphate. It catalyses the reaction 4-methyl-5-(2-phosphooxyethyl)-thiazole + 4-amino-2-methyl-5-(diphosphooxymethyl)pyrimidine + H(+) = thiamine phosphate + diphosphate. It functions in the pathway cofactor biosynthesis; thiamine diphosphate biosynthesis; thiamine phosphate from 4-amino-2-methyl-5-diphosphomethylpyrimidine and 4-methyl-5-(2-phosphoethyl)-thiazole: step 1/1. In terms of biological role, condenses 4-methyl-5-(beta-hydroxyethyl)thiazole monophosphate (THZ-P) and 2-methyl-4-amino-5-hydroxymethyl pyrimidine pyrophosphate (HMP-PP) to form thiamine monophosphate (TMP). The chain is Thiamine-phosphate synthase from Bacillus mycoides (strain KBAB4) (Bacillus weihenstephanensis).